A 278-amino-acid polypeptide reads, in one-letter code: HTH-type transcriptional activator RhaS (278 aa).

One can recognise an HTH araC/xylS-type domain in the interval 174–272 (NLLLAWLEDH…NWSPRDIRQG (99 aa)). DNA-binding regions (H-T-H motif) lie at residues 191–212 (DAVADQFSLSLRTLHRQLKQQT) and 239–262 (VTDIAYRCGFSDSNHFSTLFRREF).

As to quaternary structure, binds DNA as a dimer.

It is found in the cytoplasm. Activates expression of the rhaBAD and rhaT operons. This is HTH-type transcriptional activator RhaS from Shigella flexneri serotype 5b (strain 8401).